We begin with the raw amino-acid sequence, 876 residues long: Alanine--tRNA ligase (876 aa).

Zn(2+) contacts are provided by His564, His568, Cys666, and His670.

The protein belongs to the class-II aminoacyl-tRNA synthetase family. Zn(2+) serves as cofactor.

It is found in the cytoplasm. The catalysed reaction is tRNA(Ala) + L-alanine + ATP = L-alanyl-tRNA(Ala) + AMP + diphosphate. In terms of biological role, catalyzes the attachment of alanine to tRNA(Ala) in a two-step reaction: alanine is first activated by ATP to form Ala-AMP and then transferred to the acceptor end of tRNA(Ala). Also edits incorrectly charged Ser-tRNA(Ala) and Gly-tRNA(Ala) via its editing domain. This chain is Alanine--tRNA ligase, found in Colwellia psychrerythraea (strain 34H / ATCC BAA-681) (Vibrio psychroerythus).